A 279-amino-acid polypeptide reads, in one-letter code: Large ribosomal subunit protein uL2 (279 aa).

Disordered stretches follow at residues 29-49 (PVKQ…NGRV) and 202-279 (NASI…KKKG). Residues 36–49 (GKSSSGGRNNNGRV) show a composition bias toward low complexity. The span at 209 to 220 (GRSRWLGRRPHN) shows a compositional bias: basic residues.

The protein belongs to the universal ribosomal protein uL2 family. Part of the 50S ribosomal subunit. Forms a bridge to the 30S subunit in the 70S ribosome.

One of the primary rRNA binding proteins. Required for association of the 30S and 50S subunits to form the 70S ribosome, for tRNA binding and peptide bond formation. It has been suggested to have peptidyltransferase activity; this is somewhat controversial. Makes several contacts with the 16S rRNA in the 70S ribosome. The protein is Large ribosomal subunit protein uL2 of Beijerinckia indica subsp. indica (strain ATCC 9039 / DSM 1715 / NCIMB 8712).